Reading from the N-terminus, the 351-residue chain is UDP-N-acetylglucosamine transporter slc35b4 (351 aa).

The next 10 membrane-spanning stretches (helical) occupy residues 6–26, 37–57, 77–97, 104–124, 136–156, 173–193, 209–229, 252–274, 282–302, and 306–326; these read LISL…VISL, AILV…FVNI, IPLK…VLNN, IPIP…IVIG, QILS…SSMP, FSIG…LGLI, TIFY…DDIL, TLWV…VFIL, TCTL…VIYF, and FTSL…MYST.

This sequence belongs to the nucleotide-sugar transporter family. SLC35B subfamily.

Its subcellular location is the golgi apparatus membrane. Functionally, sugar transporter that specifically mediates the transport of UDP-N-acetylglucosamine (UDP-GlcNAc) from cytosol into Golgi. The protein is UDP-N-acetylglucosamine transporter slc35b4 (slc35b4) of Dictyostelium discoideum (Social amoeba).